The chain runs to 211 residues: 3-demethoxyubiquinol 3-hydroxylase (211 aa).

Fe cation contacts are provided by glutamate 60, glutamate 90, histidine 93, glutamate 142, glutamate 174, and histidine 177.

Belongs to the COQ7 family. Requires Fe cation as cofactor.

Its subcellular location is the cell membrane. The enzyme catalyses a 5-methoxy-2-methyl-3-(all-trans-polyprenyl)benzene-1,4-diol + AH2 + O2 = a 3-demethylubiquinol + A + H2O. It participates in cofactor biosynthesis; ubiquinone biosynthesis. Catalyzes the hydroxylation of 2-nonaprenyl-3-methyl-6-methoxy-1,4-benzoquinol during ubiquinone biosynthesis. The sequence is that of 3-demethoxyubiquinol 3-hydroxylase from Francisella tularensis subsp. novicida (strain U112).